A 209-amino-acid chain; its full sequence is 3-hexulose-6-phosphate synthase (209 aa).

This sequence belongs to the HPS/KGPDC family. HPS subfamily. Homodimer.

It carries out the reaction D-ribulose 5-phosphate + formaldehyde = D-arabino-hex-3-ulose 6-phosphate. Its pathway is one-carbon metabolism; formaldehyde assimilation via RuMP pathway; D-fructose 6-phosphate from D-ribulose 5-phosphate and formaldehyde: step 1/2. Its function is as follows. Catalyzes the condensation of ribulose 5-phosphate with formaldehyde to form 3-hexulose 6-phosphate. In Methylomonas aminofaciens, this protein is 3-hexulose-6-phosphate synthase (rmpA).